The following is a 91-amino-acid chain: Small ribosomal subunit protein bS20 (91 aa).

Residues 1–23 are disordered; that stretch reads MANTPSAKKRAKQAEKRRSHNAS. The segment covering 7-20 has biased composition (basic residues); it reads AKKRAKQAEKRRSH.

Belongs to the bacterial ribosomal protein bS20 family.

Functionally, binds directly to 16S ribosomal RNA. The protein is Small ribosomal subunit protein bS20 of Pseudomonas paraeruginosa (strain DSM 24068 / PA7) (Pseudomonas aeruginosa (strain PA7)).